Reading from the N-terminus, the 1229-residue chain is Pesticidal crystal protein Cry1Bb (1229 aa).

This sequence belongs to the delta endotoxin family.

Its function is as follows. Promotes colloidosmotic lysis by binding to the midgut epithelial cells of many lepidopteran larvae. In Bacillus thuringiensis, this protein is Pesticidal crystal protein Cry1Bb (cry1Bb).